The primary structure comprises 249 residues: Phosphatidylglycerol--prolipoprotein diacylglyceryl transferase (249 aa).

7 helical membrane passes run 11–31, 49–69, 82–102, 116–136, 163–183, 192–212, and 223–243; these read LKIY…VILL, AIVG…IVDI, LGNG…VYLY, LVVP…FLAG, LHPT…FLLW, GRVF…VEFL, and LSTS…VFNI. R129 is an a 1,2-diacyl-sn-glycero-3-phospho-(1'-sn-glycerol) binding site.

It belongs to the Lgt family.

It localises to the cell membrane. The enzyme catalyses L-cysteinyl-[prolipoprotein] + a 1,2-diacyl-sn-glycero-3-phospho-(1'-sn-glycerol) = an S-1,2-diacyl-sn-glyceryl-L-cysteinyl-[prolipoprotein] + sn-glycerol 1-phosphate + H(+). The protein operates within protein modification; lipoprotein biosynthesis (diacylglyceryl transfer). Catalyzes the transfer of the diacylglyceryl group from phosphatidylglycerol to the sulfhydryl group of the N-terminal cysteine of a prolipoprotein, the first step in the formation of mature lipoproteins. The protein is Phosphatidylglycerol--prolipoprotein diacylglyceryl transferase of Clostridium tetani (strain Massachusetts / E88).